The sequence spans 627 residues: Chaperone protein DnaK (627 aa).

Threonine 197 is modified (phosphothreonine; by autocatalysis). Residues 602 to 611 are compositionally biased toward polar residues; it reads ENQHSEANTV. The disordered stretch occupies residues 602-627; it reads ENQHSEANTVNDEKVVDADFQDVDKK. The segment covering 612–627 has biased composition (basic and acidic residues); sequence NDEKVVDADFQDVDKK.

Belongs to the heat shock protein 70 family.

Functionally, acts as a chaperone. In Rickettsia felis (strain ATCC VR-1525 / URRWXCal2) (Rickettsia azadi), this protein is Chaperone protein DnaK.